A 349-amino-acid polypeptide reads, in one-letter code: Phenylalanine--tRNA ligase alpha subunit (349 aa).

Glu258 contacts Mg(2+).

The protein belongs to the class-II aminoacyl-tRNA synthetase family. Phe-tRNA synthetase alpha subunit type 1 subfamily. As to quaternary structure, tetramer of two alpha and two beta subunits. Mg(2+) is required as a cofactor.

The protein localises to the cytoplasm. It catalyses the reaction tRNA(Phe) + L-phenylalanine + ATP = L-phenylalanyl-tRNA(Phe) + AMP + diphosphate + H(+). The polypeptide is Phenylalanine--tRNA ligase alpha subunit (Rickettsia felis (strain ATCC VR-1525 / URRWXCal2) (Rickettsia azadi)).